The following is a 428-amino-acid chain: Tyrosine--tRNA ligase (428 aa).

Y36 serves as a coordination point for L-tyrosine. The 'HIGH' region motif lies at 41–50 (PTARSLHIGS). Positions 169 and 173 each coordinate L-tyrosine. Positions 229–233 (KMGKT) match the 'KMSKS' region motif. K232 is an ATP binding site. Residues 361–427 (IPAYEIMHEC…GKKKYMIIKV (67 aa)) enclose the S4 RNA-binding domain.

The protein belongs to the class-I aminoacyl-tRNA synthetase family. TyrS type 1 subfamily. In terms of assembly, homodimer.

The protein localises to the cytoplasm. It catalyses the reaction tRNA(Tyr) + L-tyrosine + ATP = L-tyrosyl-tRNA(Tyr) + AMP + diphosphate + H(+). In terms of biological role, catalyzes the attachment of tyrosine to tRNA(Tyr) in a two-step reaction: tyrosine is first activated by ATP to form Tyr-AMP and then transferred to the acceptor end of tRNA(Tyr). This is Tyrosine--tRNA ligase from Syntrophus aciditrophicus (strain SB).